We begin with the raw amino-acid sequence, 440 residues long: 3-phosphoshikimate 1-carboxyvinyltransferase (440 aa).

3-phosphoshikimate contacts are provided by Lys-29 and Arg-34. Position 29 (Lys-29) interacts with phosphoenolpyruvate. Phosphoenolpyruvate-binding residues include Gly-99 and Arg-128. Positions 171, 172, 173, 199, 316, and 343 each coordinate 3-phosphoshikimate. Residue Gln-173 participates in phosphoenolpyruvate binding. Catalysis depends on Asp-316, which acts as the Proton acceptor. Positions 347, 390, and 416 each coordinate phosphoenolpyruvate.

The protein belongs to the EPSP synthase family. In terms of assembly, monomer.

The protein localises to the cytoplasm. The catalysed reaction is 3-phosphoshikimate + phosphoenolpyruvate = 5-O-(1-carboxyvinyl)-3-phosphoshikimate + phosphate. It participates in metabolic intermediate biosynthesis; chorismate biosynthesis; chorismate from D-erythrose 4-phosphate and phosphoenolpyruvate: step 6/7. Its function is as follows. Catalyzes the transfer of the enolpyruvyl moiety of phosphoenolpyruvate (PEP) to the 5-hydroxyl of shikimate-3-phosphate (S3P) to produce enolpyruvyl shikimate-3-phosphate and inorganic phosphate. This is 3-phosphoshikimate 1-carboxyvinyltransferase from Deinococcus geothermalis (strain DSM 11300 / CIP 105573 / AG-3a).